We begin with the raw amino-acid sequence, 206 residues long: Large ribosomal subunit protein mL62 (206 aa).

The transit peptide at 1 to 29 (MAAARCLRWGLSRAEAWLLPPPTSCCHRA) directs the protein to the mitochondrion. Residue glutamine 90 is modified to N5-methylglutamine.

The protein belongs to the prokaryotic/mitochondrial release factor family. Mitochondrion-specific ribosomal protein mL62 subfamily. Component of the mitochondrial ribosome large subunit (39S) which comprises a 16S rRNA and about 50 distinct proteins. In terms of processing, methylation of glutamine in the GGQ triplet by HEMK1.

The protein resides in the mitochondrion. The catalysed reaction is an N-acyl-L-alpha-aminoacyl-tRNA + H2O = an N-acyl-L-amino acid + a tRNA + H(+). Essential peptidyl-tRNA hydrolase component of the mitochondrial large ribosomal subunit. Acts as a codon-independent translation release factor that has lost all stop codon specificity and directs the termination of translation in mitochondrion, possibly in case of abortive elongation. May be involved in the hydrolysis of peptidyl-tRNAs that have been prematurely terminated and thus in the recycling of stalled mitochondrial ribosomes. This Bos taurus (Bovine) protein is Large ribosomal subunit protein mL62.